A 180-amino-acid chain; its full sequence is Large ribosomal subunit protein uL5 (180 aa).

This sequence belongs to the universal ribosomal protein uL5 family. Part of the 50S ribosomal subunit; part of the 5S rRNA/L5/L18/L25 subcomplex. Contacts the 5S rRNA and the P site tRNA. Forms a bridge to the 30S subunit in the 70S ribosome.

In terms of biological role, this is one of the proteins that bind and probably mediate the attachment of the 5S RNA into the large ribosomal subunit, where it forms part of the central protuberance. In the 70S ribosome it contacts protein S13 of the 30S subunit (bridge B1b), connecting the 2 subunits; this bridge is implicated in subunit movement. Contacts the P site tRNA; the 5S rRNA and some of its associated proteins might help stabilize positioning of ribosome-bound tRNAs. This Latilactobacillus sakei subsp. sakei (strain 23K) (Lactobacillus sakei subsp. sakei) protein is Large ribosomal subunit protein uL5.